A 261-amino-acid polypeptide reads, in one-letter code: Cytochrome c oxidase subunit 3 (261 aa).

Residues 1–15 (MTHQTHAYHMVNPSP) lie on the Mitochondrial matrix side of the membrane. A helical transmembrane segment spans residues 16-34 (WPLTGALSALLMTSGLIMW). At 35 to 40 (FHFNST) the chain is on the mitochondrial intermembrane side. The helical transmembrane segment at 41–66 (TLLMLGLTTNMLTMYQWWRDVIREST) threads the bilayer. The Mitochondrial matrix portion of the chain corresponds to 67 to 72 (FQGHHT). Residues 73-105 (PNVQKGLRYGMILFIISEVLFFTGFFWAFYHSS) form a helical membrane-spanning segment. Topologically, residues 106–128 (LAPTPELGGCWPPTGINPLNPLE) are mitochondrial intermembrane. Residues 129 to 152 (VPLLNTSVLLASGVSITWAHHSLM) form a helical membrane-spanning segment. Topologically, residues 153–155 (EGN) are mitochondrial matrix. Residues 156–183 (RNHMLQALFITIALGVYFTLLQASEYYE) traverse the membrane as a helical segment. Residues 184-190 (APFTISD) lie on the Mitochondrial intermembrane side of the membrane. The helical transmembrane segment at 191-223 (GVYGSTFFVATGFHGLHVIIGSTFLIVCFFRQL) threads the bilayer. Residues 224–232 (KFHFTSNHH) lie on the Mitochondrial matrix side of the membrane. Residues 233–256 (FGFEAAAWYWHFVDVVWLFLYVSI) form a helical membrane-spanning segment. Topologically, residues 257 to 261 (YWWGS) are mitochondrial intermembrane.

Belongs to the cytochrome c oxidase subunit 3 family. Component of the cytochrome c oxidase (complex IV, CIV), a multisubunit enzyme composed of 14 subunits. The complex is composed of a catalytic core of 3 subunits MT-CO1, MT-CO2 and MT-CO3, encoded in the mitochondrial DNA, and 11 supernumerary subunits COX4I, COX5A, COX5B, COX6A, COX6B, COX6C, COX7A, COX7B, COX7C, COX8 and NDUFA4, which are encoded in the nuclear genome. The complex exists as a monomer or a dimer and forms supercomplexes (SCs) in the inner mitochondrial membrane with NADH-ubiquinone oxidoreductase (complex I, CI) and ubiquinol-cytochrome c oxidoreductase (cytochrome b-c1 complex, complex III, CIII), resulting in different assemblies (supercomplex SCI(1)III(2)IV(1) and megacomplex MCI(2)III(2)IV(2)).

It is found in the mitochondrion inner membrane. The enzyme catalyses 4 Fe(II)-[cytochrome c] + O2 + 8 H(+)(in) = 4 Fe(III)-[cytochrome c] + 2 H2O + 4 H(+)(out). Its function is as follows. Component of the cytochrome c oxidase, the last enzyme in the mitochondrial electron transport chain which drives oxidative phosphorylation. The respiratory chain contains 3 multisubunit complexes succinate dehydrogenase (complex II, CII), ubiquinol-cytochrome c oxidoreductase (cytochrome b-c1 complex, complex III, CIII) and cytochrome c oxidase (complex IV, CIV), that cooperate to transfer electrons derived from NADH and succinate to molecular oxygen, creating an electrochemical gradient over the inner membrane that drives transmembrane transport and the ATP synthase. Cytochrome c oxidase is the component of the respiratory chain that catalyzes the reduction of oxygen to water. Electrons originating from reduced cytochrome c in the intermembrane space (IMS) are transferred via the dinuclear copper A center (CU(A)) of subunit 2 and heme A of subunit 1 to the active site in subunit 1, a binuclear center (BNC) formed by heme A3 and copper B (CU(B)). The BNC reduces molecular oxygen to 2 water molecules using 4 electrons from cytochrome c in the IMS and 4 protons from the mitochondrial matrix. The protein is Cytochrome c oxidase subunit 3 (MT-CO3) of Gazella subgutturosa (Goitred gazelle).